A 164-amino-acid chain; its full sequence is Phosphohistidine phosphatase SixA homolog (164 aa).

This sequence belongs to the SixA phosphatase family.

This chain is Phosphohistidine phosphatase SixA homolog (sixA-A), found in Haemophilus influenzae (strain ATCC 51907 / DSM 11121 / KW20 / Rd).